The following is a 332-amino-acid chain: Methionine synthase (332 aa).

The Zn(2+) site is built by His211, Cys213, and Cys296.

The protein belongs to the archaeal MetE family. Zn(2+) is required as a cofactor.

The protein operates within amino-acid biosynthesis; L-methionine biosynthesis via de novo pathway. Functionally, catalyzes the transfer of a methyl group to L-homocysteine resulting in methionine formation. The physiological methyl donor is unknown. In Saccharolobus islandicus (strain L.S.2.15 / Lassen #1) (Sulfolobus islandicus), this protein is Methionine synthase.